The following is a 120-amino-acid chain: Glutamate--tRNA ligase (120 aa).

It belongs to the class-I aminoacyl-tRNA synthetase family. Glutamate--tRNA ligase type 1 subfamily. In terms of assembly, monomer.

It localises to the cytoplasm. The catalysed reaction is tRNA(Glu) + L-glutamate + ATP = L-glutamyl-tRNA(Glu) + AMP + diphosphate. Catalyzes the attachment of glutamate to tRNA(Glu) in a two-step reaction: glutamate is first activated by ATP to form Glu-AMP and then transferred to the acceptor end of tRNA(Glu). The sequence is that of Glutamate--tRNA ligase (gltX) from Staphylococcus xylosus.